An 898-amino-acid polypeptide reads, in one-letter code: Chitin synthase 1 (898 aa).

Residues Met-1–Arg-154 are disordered. Pro residues predominate over residues Pro-9–Pro-21. 2 stretches are compositionally biased toward polar residues: residues Asp-64–Asp-75 and Asp-136–Pro-146. Transmembrane regions (helical) follow at residues Ser-441 to Leu-461, Arg-540 to Leu-560, Phe-570 to Ile-590, Ile-616 to Ser-636, and Met-651 to Val-671. Asn-685 carries N-linked (GlcNAc...) asparagine glycosylation. The next 4 helical transmembrane spans lie at Met-697–Leu-717, Phe-726–Cys-746, Gly-825–Ala-845, and Ile-870–Leu-890.

This sequence belongs to the chitin synthase family. Class I subfamily.

It localises to the cell membrane. It carries out the reaction [(1-&gt;4)-N-acetyl-beta-D-glucosaminyl](n) + UDP-N-acetyl-alpha-D-glucosamine = [(1-&gt;4)-N-acetyl-beta-D-glucosaminyl](n+1) + UDP + H(+). In terms of biological role, polymerizes chitin, a structural polymer of the cell wall and septum, by transferring the sugar moiety of UDP-GlcNAc to the non-reducing end of the growing chitin polymer. Shows additive effects in septum formation with CHS2, CHS3A, CHS4, CHS5, CHS6 and CHS7. Regulates mycelial growth and conidiation. Involved in virulence and mediates mycotoxin deoxinivalenol (DON) biosynthesis via the regulation of the expression of TRI4, TRI5 and TRI6. This chain is Chitin synthase 1, found in Gibberella zeae (strain ATCC MYA-4620 / CBS 123657 / FGSC 9075 / NRRL 31084 / PH-1) (Wheat head blight fungus).